We begin with the raw amino-acid sequence, 237 residues long: Phosphoribosylaminoimidazole-succinocarboxamide synthase (237 aa).

This sequence belongs to the SAICAR synthetase family.

It catalyses the reaction 5-amino-1-(5-phospho-D-ribosyl)imidazole-4-carboxylate + L-aspartate + ATP = (2S)-2-[5-amino-1-(5-phospho-beta-D-ribosyl)imidazole-4-carboxamido]succinate + ADP + phosphate + 2 H(+). It functions in the pathway purine metabolism; IMP biosynthesis via de novo pathway; 5-amino-1-(5-phospho-D-ribosyl)imidazole-4-carboxamide from 5-amino-1-(5-phospho-D-ribosyl)imidazole-4-carboxylate: step 1/2. The sequence is that of Phosphoribosylaminoimidazole-succinocarboxamide synthase from Salmonella agona (strain SL483).